A 416-amino-acid chain; its full sequence is Isobutyryl-CoA dehydrogenase, mitochondrial (416 aa).

The transit peptide at 1-23 directs the protein to the mitochondrion; the sequence is MMLRGGCQRVGARLRGLRRGPRG. N6-acetyllysine; alternate is present on Lys-51. Lys-51 bears the N6-succinyllysine; alternate mark. FAD is bound by residues 159 to 168 and 192 to 194; these read YCLTEPGSGS and FIS. Ser-168 is a binding site for substrate. Lys-232 carries the post-translational modification N6-acetyllysine. Lys-272 is modified (N6-succinyllysine). 275-278 is a binding site for substrate; it reads NGGR. FAD-binding positions include Arg-303, 313–314, and 372–376; these read SQ and QMHGG. Glu-399 (proton acceptor) is an active-site residue. Residue 401-403 coordinates FAD; the sequence is SNE. Arg-411 provides a ligand contact to substrate.

Belongs to the acyl-CoA dehydrogenase family. Homotetramer, formed by a dimer of dimers. It depends on FAD as a cofactor.

The protein resides in the mitochondrion. It carries out the reaction 2-methylpropanoyl-CoA + oxidized [electron-transfer flavoprotein] + H(+) = 2-methylpropenoyl-CoA + reduced [electron-transfer flavoprotein]. It catalyses the reaction (2S)-2-methylbutanoyl-CoA + oxidized [electron-transfer flavoprotein] + H(+) = (2E)-2-methylbut-2-enoyl-CoA + reduced [electron-transfer flavoprotein]. The enzyme catalyses propanoyl-CoA + oxidized [electron-transfer flavoprotein] + H(+) = acryloyl-CoA + reduced [electron-transfer flavoprotein]. Its pathway is amino-acid degradation; L-valine degradation. In terms of biological role, isobutyryl-CoA dehydrogenase which catalyzes the conversion of 2-methylpropanoyl-CoA to (2E)-2-methylpropenoyl-CoA in the valine catabolic pathway. To a lesser extent, also able to catalyze the oxidation of (2S)-2-methylbutanoyl-CoA. The chain is Isobutyryl-CoA dehydrogenase, mitochondrial (ACAD8) from Bos taurus (Bovine).